Reading from the N-terminus, the 72-residue chain is Translational regulator CsrA (72 aa).

The protein belongs to the CsrA/RsmA family. In terms of assembly, homodimer; the beta-strands of each monomer intercalate to form a hydrophobic core, while the alpha-helices form wings that extend away from the core.

Its subcellular location is the cytoplasm. Its function is as follows. A translational regulator that binds mRNA to regulate translation initiation and/or mRNA stability. Usually binds in the 5'-UTR at or near the Shine-Dalgarno sequence preventing ribosome-binding, thus repressing translation. Its main target seems to be the major flagellin gene, while its function is anatagonized by FliW. The protein is Translational regulator CsrA of Clostridium botulinum (strain Okra / Type B1).